The following is a 128-amino-acid chain: Global transcriptional regulator Spx 1 (128 aa).

Cys10 and Cys13 are joined by a disulfide.

This sequence belongs to the ArsC family. Spx subfamily. Interacts with the C-terminal domain of the alpha subunit of the RNAP.

It localises to the cytoplasm. Functionally, global transcriptional regulator that plays a key role in stress response and exerts either positive or negative regulation of genes. Acts by interacting with the C-terminal domain of the alpha subunit of the RNA polymerase (RNAP). This interaction can enhance binding of RNAP to the promoter region of target genes and stimulate their transcription, or block interaction of RNAP with activator. The sequence is that of Global transcriptional regulator Spx 1 from Lactococcus lactis subsp. lactis (strain IL1403) (Streptococcus lactis).